A 512-amino-acid polypeptide reads, in one-letter code: Anaerobic nitric oxide reductase transcription regulator NorR (512 aa).

Residues 190–419 form the Sigma-54 factor interaction domain; sequence MIGESLAMQE…LEHVISRAAV (230 aa). Residues 218 to 225 and 281 to 290 each bind ATP; these read GETGVGKE and ADNGTLFLDE. Positions 487-506 form a DNA-binding region, H-T-H motif; sequence WAATARALQLDTGNLHRLAK.

It participates in nitrogen metabolism; nitric oxide reduction. Required for the expression of anaerobic nitric oxide (NO) reductase, acts as a transcriptional activator for at least the norVW operon. Activation also requires sigma-54. The protein is Anaerobic nitric oxide reductase transcription regulator NorR of Aliivibrio fischeri (strain ATCC 700601 / ES114) (Vibrio fischeri).